A 348-amino-acid polypeptide reads, in one-letter code: Protein RecA (348 aa).

ATP is bound at residue 65 to 72; sequence GPESSGKT.

The protein belongs to the RecA family.

It is found in the cytoplasm. Functionally, can catalyze the hydrolysis of ATP in the presence of single-stranded DNA, the ATP-dependent uptake of single-stranded DNA by duplex DNA, and the ATP-dependent hybridization of homologous single-stranded DNAs. It interacts with LexA causing its activation and leading to its autocatalytic cleavage. The sequence is that of Protein RecA from Enterococcus faecalis (strain ATCC 700802 / V583).